Consider the following 59-residue polypeptide: Large ribosomal subunit protein bL32 (59 aa).

A disordered region spans residues methionine 1 to threonine 23.

It belongs to the bacterial ribosomal protein bL32 family.

This is Large ribosomal subunit protein bL32 from Burkholderia multivorans (strain ATCC 17616 / 249).